The primary structure comprises 283 residues: Non-selective voltage-gated ion channel VDAC1 (283 aa).

A2 is subject to N-acetylalanine. K12 contributes to the ATP binding site. A Glycyl lysine isopeptide (Lys-Gly) (interchain with G-Cter in ubiquitin) cross-link involves residue K12. At S13 the chain carries Phosphoserine. T19 carries the phosphothreonine modification. K20 contacts ATP. An N6-acetyllysine; alternate modification is found at K20. N6-succinyllysine; alternate is present on K20. K20 is covalently cross-linked (Glycyl lysine isopeptide (Lys-Gly) (interchain with G-Cter in ubiquitin); alternate). The next 2 beta stranded transmembrane spans lie at L26–S35 and L39–A47. Residues K53 and K61 each participate in a glycyl lysine isopeptide (Lys-Gly) (interchain with G-Cter in ubiquitin) cross-link. The chain crosses the membrane as a beta stranded span at residues V54 to W64. Position 67 is a phosphotyrosine (Y67). 3 beta stranded membrane-spanning segments follow: residues L69 to N76, T80 to D89, and L95 to S104. Position 107 is a phosphothreonine (T107). An N6-acetyllysine; alternate modification is found at K109. Residue K109 forms a Glycyl lysine isopeptide (Lys-Gly) (interchain with G-Cter in ubiquitin); alternate linkage. K110 is covalently cross-linked (Glycyl lysine isopeptide (Lys-Gly) (interchain with G-Cter in ubiquitin)). The next 4 membrane-spanning stretches (beta stranded) occupy residues N111–R120, V123–D130, S137–G145, and L150–E158. Residue K161 forms a Glycyl lysine isopeptide (Lys-Gly) (interchain with G-Cter in ubiquitin) linkage. 6 beta stranded membrane passes run R163 to T175, F178 to N185, E189 to V198, L202 to T211, R218 to I227, and A231 to N238. A Phosphoserine; by NEK1 modification is found at S193. Phosphoserine is present on S240. L242–G244 contacts NAD(+). The beta stranded transmembrane segment at L242–L251 threads the bilayer. At K252 the chain carries N6-acetyllysine. A beta stranded transmembrane segment spans residues G254 to L263. NAD(+) is bound at residue S260–D264. Residue K266 is modified to N6-acetyllysine; alternate. A Glycyl lysine isopeptide (Lys-Gly) (interchain with G-Cter in ubiquitin); alternate cross-link involves residue K266. The beta stranded transmembrane segment at H273–Q282 threads the bilayer. K274 is covalently cross-linked (Glycyl lysine isopeptide (Lys-Gly) (interchain with G-Cter in ubiquitin)).

This sequence belongs to the eukaryotic mitochondrial porin family. Homodimer and homotrimer; in response to cyclic AMP or calcium; oligomerization is required for scramblase activity. Component of the mitochondrial permeability transition pore complex (mPTPC), at least composed of SPG7, VDAC1 and PPIF. Interacts with SPG7, NIPSNAP2 and SLC25A30. Interacts with hexokinases including HK1. The HK1-VDAC1 complex interacts with ATF2. Interacts with BCL2L1. Interacts with BAK1. Interacts with RTL10/BOP (via BH3 domain). Interacts with amyloid-beta and APP; induces VDAC1 dephosphorylation. Interacts with TMEM41B. Interacts with BCAP31. Interacts with HSPA9; this interaction couples ITPR1 to VDAC1. Post-translationally, phosphorylation at Ser-193 by NEK1 promotes the closed conformational state preventing excessive mitochondrial membrane permeability and subsequent apoptotic cell death after injury. Phosphorylation by the AKT-GSK3B axis stabilizes the protein probably by preventing ubiquitin-mediated proteasomal degradation. In terms of processing, ubiquitinated. Undergoes monoubiquitination and polyubiquitination by PRKN; monoubiquitination at Lys-274 inhibits apoptosis, whereas polyubiquitination leads to its degradation and promotes mitophagy. Deubiquitinated by USP30.

It localises to the mitochondrion outer membrane. It is found in the cell membrane. The protein localises to the membrane raft. It catalyses the reaction chloride(in) = chloride(out). The enzyme catalyses K(+)(in) = K(+)(out). It carries out the reaction ATP(in) = ATP(out). The catalysed reaction is Ca(2+)(in) = Ca(2+)(out). It catalyses the reaction Na(+)(in) = Na(+)(out). The enzyme catalyses Mg(2+)(in) = Mg(2+)(out). It carries out the reaction L-glutamate(out) = L-glutamate(in). The catalysed reaction is dopamine(out) = dopamine(in). It catalyses the reaction acetylcholine(in) = acetylcholine(out). The enzyme catalyses Fe(III)-[cytochrome c](out) = Fe(III)-[cytochrome c](in). It carries out the reaction a 1,2-diacyl-sn-glycero-3-phosphocholine(in) = a 1,2-diacyl-sn-glycero-3-phosphocholine(out). The catalysed reaction is a 1,2-diacyl-sn-glycero-3-phospho-L-serine(in) = a 1,2-diacyl-sn-glycero-3-phospho-L-serine(out). Its activity is regulated as follows. Inhibited by nitric oxide. Functionally, non-selective voltage-gated ion channel that mediates the transport of anions and cations through the mitochondrion outer membrane and plasma membrane. The channel at the outer mitochondrial membrane allows diffusion of small hydrophilic molecules; in the plasma membrane it is involved in cell volume regulation and apoptosis. It adopts an open conformation at low or zero membrane potential and a closed conformation at potentials above 30-40 mV. The open state has a weak anion selectivity whereas the closed state is cation-selective. Binds various signaling molecules, including the sphingolipid ceramide, the phospholipid phosphatidylcholine, and the sterols cholesterol and oxysterol. In depolarized mitochondria, acts downstream of PRKN and PINK1 to promote mitophagy or prevent apoptosis; polyubiquitination by PRKN promotes mitophagy, while monoubiquitination by PRKN decreases mitochondrial calcium influx which ultimately inhibits apoptosis. May participate in the formation of the permeability transition pore complex (PTPC) responsible for the release of mitochondrial products that triggers apoptosis. May mediate ATP export from cells. Part of a complex composed of HSPA9, ITPR1 and VDAC1 that regulates mitochondrial calcium-dependent apoptosis by facilitating calcium transport from the ER lumen to the mitochondria intermembrane space thus providing calcium for the downstream calcium channel MCU that directly releases it into mitochondria matrix. Mediates cytochrome c efflux. In terms of biological role, catalyzes the scrambling of phospholipids across the outer mitochondrial membrane; the mechanism is unrelated to channel activity and is capable of translocating both anionic and zwitterionic phospholipids. The chain is Non-selective voltage-gated ion channel VDAC1 from Sus scrofa (Pig).